A 318-amino-acid polypeptide reads, in one-letter code: Ferrochelatase (318 aa).

Fe cation-binding residues include histidine 194 and glutamate 275.

The protein belongs to the ferrochelatase family.

It is found in the cytoplasm. The catalysed reaction is heme b + 2 H(+) = protoporphyrin IX + Fe(2+). It participates in porphyrin-containing compound metabolism; protoheme biosynthesis; protoheme from protoporphyrin-IX: step 1/1. Catalyzes the ferrous insertion into protoporphyrin IX. This is Ferrochelatase from Xanthomonas axonopodis pv. citri (strain 306).